We begin with the raw amino-acid sequence, 563 residues long: Arginine--tRNA ligase (563 aa).

Residues 120–130 (PNIAKPFHIGH) carry the 'HIGH' region motif.

It belongs to the class-I aminoacyl-tRNA synthetase family. In terms of assembly, monomer.

The protein resides in the cytoplasm. It carries out the reaction tRNA(Arg) + L-arginine + ATP = L-arginyl-tRNA(Arg) + AMP + diphosphate. The sequence is that of Arginine--tRNA ligase from Clostridium botulinum (strain ATCC 19397 / Type A).